We begin with the raw amino-acid sequence, 790 residues long: LPS-assembly protein LptD (790 aa).

The N-terminal stretch at 1–20 (MRMLRWLILSAFSVAGAVQA) is a signal peptide.

This sequence belongs to the LptD family. In terms of assembly, component of the lipopolysaccharide transport and assembly complex. Interacts with LptE and LptA.

The protein resides in the cell outer membrane. Its function is as follows. Together with LptE, is involved in the assembly of lipopolysaccharide (LPS) at the surface of the outer membrane. This Bordetella pertussis (strain Tohama I / ATCC BAA-589 / NCTC 13251) protein is LPS-assembly protein LptD.